The following is a 221-amino-acid chain: Pectate lyase C (221 aa).

An N-terminal signal peptide occupies residues 1–28; sequence MKRLAGTVILSGLLVCGFGQALPEKALA.

The protein belongs to the polysaccharide lyase 3 family. Ca(2+) is required as a cofactor.

It localises to the secreted. It catalyses the reaction Eliminative cleavage of (1-&gt;4)-alpha-D-galacturonan to give oligosaccharides with 4-deoxy-alpha-D-galact-4-enuronosyl groups at their non-reducing ends.. The catalysed reaction is Eliminative cleavage of (1-&gt;4)-alpha-D-galacturonan methyl ester to give oligosaccharides with 4-deoxy-6-O-methyl-alpha-D-galact-4-enuronosyl groups at their non-reducing ends.. It participates in glycan metabolism; pectin degradation; 2-dehydro-3-deoxy-D-gluconate from pectin: step 2/5. Its function is as follows. Catalyzes the depolymerization of both polygalacturonate and pectins of methyl esterification degree from 22 to 89%, with an endo mode of action. In contrast to the majority of pectate lyases, displays high activity on highly methylated pectins. This chain is Pectate lyase C (pelC), found in Bacillus licheniformis (strain ATCC 14580 / DSM 13 / JCM 2505 / CCUG 7422 / NBRC 12200 / NCIMB 9375 / NCTC 10341 / NRRL NRS-1264 / Gibson 46).